A 447-amino-acid chain; its full sequence is Protein O-GlcNAcase (447 aa).

Residues 1–277 (MLTGVIEGFY…TTGAYLADPD (277 aa)) enclose the GH84 domain. 3 residues coordinate a protein: Gly8, Lys39, and Asp115. Residue Asp116 is the Proton donor of the active site. A protein-binding positions include Tyr160, 219–221 (WDN), Asp226, and Asn254.

The protein belongs to the glycosyl hydrolase 84 family.

The catalysed reaction is 3-O-(N-acetyl-beta-D-glucosaminyl)-L-seryl-[protein] + H2O = N-acetyl-D-glucosamine + L-seryl-[protein]. The enzyme catalyses 3-O-(N-acetyl-beta-D-glucosaminyl)-L-threonyl-[protein] + H2O = L-threonyl-[protein] + N-acetyl-D-glucosamine. With respect to regulation, inhibited by PUGNac (O-(2-acetamido-2-deoxy-D-glucopyranosylidene)amino-N-phenylcarbamate). Its function is as follows. Cleaves GlcNAc from O-glycosylated proteins. Can use p-nitrophenyl-beta-GlcNAc and 4-methylumbelliferone-GlcNAc as substrate (in vitro). The protein is Protein O-GlcNAcase of Oceanicola granulosus (strain ATCC BAA-861 / DSM 15982 / KCTC 12143 / HTCC2516).